The primary structure comprises 297 residues: Nucleotide-binding protein Bphy_0322 (297 aa).

An ATP-binding site is contributed by 8–15 (GISGSGKS). 57-60 (DARS) provides a ligand contact to GTP.

It belongs to the RapZ-like family.

In terms of biological role, displays ATPase and GTPase activities. The sequence is that of Nucleotide-binding protein Bphy_0322 from Paraburkholderia phymatum (strain DSM 17167 / CIP 108236 / LMG 21445 / STM815) (Burkholderia phymatum).